A 465-amino-acid polypeptide reads, in one-letter code: Ribulose bisphosphate carboxylase large chain (465 aa).

N6,N6,N6-trimethyllysine is present on K4. 2 residues coordinate substrate: N113 and T163. Catalysis depends on K165, which acts as the Proton acceptor. Residue K167 participates in substrate binding. K191, D193, and E194 together coordinate Mg(2+). Position 191 is an N6-carboxylysine (K191). H284 functions as the Proton acceptor in the catalytic mechanism. R285, H317, and S369 together coordinate substrate.

It belongs to the RuBisCO large chain family. Type I subfamily. As to quaternary structure, heterohexadecamer of 8 large chains and 8 small chains; disulfide-linked. The disulfide link is formed within the large subunit homodimers. It depends on Mg(2+) as a cofactor. In terms of processing, the disulfide bond which can form in the large chain dimeric partners within the hexadecamer appears to be associated with oxidative stress and protein turnover.

It localises to the plastid. The protein resides in the chloroplast. It catalyses the reaction 2 (2R)-3-phosphoglycerate + 2 H(+) = D-ribulose 1,5-bisphosphate + CO2 + H2O. The catalysed reaction is D-ribulose 1,5-bisphosphate + O2 = 2-phosphoglycolate + (2R)-3-phosphoglycerate + 2 H(+). In terms of biological role, ruBisCO catalyzes two reactions: the carboxylation of D-ribulose 1,5-bisphosphate, the primary event in carbon dioxide fixation, as well as the oxidative fragmentation of the pentose substrate in the photorespiration process. Both reactions occur simultaneously and in competition at the same active site. The protein is Ribulose bisphosphate carboxylase large chain of Clitoria ternatea (Butterfly pea).